The primary structure comprises 592 residues: Glycosyltransferase 25 family member (592 aa).

Residues 1 to 13 (MLALLLTTTIVSG) form the signal peptide. 2 N-linked (GlcNAc...) asparagine glycosylation sites follow: N249 and N510. Composition is skewed to basic and acidic residues over residues 552–563 (RIQEPKKGDKEQ) and 579–592 (GEHD…RSEL). A disordered region spans residues 552 to 592 (RIQEPKKGDKEQLPNAPALLSESGIGQGEHDLETKNRRSEL). The Prevents secretion from ER signature appears at 589 to 592 (RSEL).

This sequence belongs to the glycosyltransferase 25 family.

It localises to the endoplasmic reticulum lumen. The protein is Glycosyltransferase 25 family member of Anopheles gambiae (African malaria mosquito).